A 508-amino-acid chain; its full sequence is Pyruvate kinase (508 aa).

Residue Arg-56 participates in substrate binding. Positions 58, 60, 90, and 91 each coordinate K(+). Residue Asn-58–His-61 coordinates ATP. ATP contacts are provided by Arg-97 and Lys-185. Glu-251 contacts Mg(2+). Substrate is bound by residues Gly-274, Asp-275, and Thr-307. Asp-275 contributes to the Mg(2+) binding site.

The protein belongs to the pyruvate kinase family. As to quaternary structure, homotetramer. Requires Mg(2+) as cofactor. The cofactor is K(+).

The catalysed reaction is pyruvate + ATP = phosphoenolpyruvate + ADP + H(+). It functions in the pathway carbohydrate degradation; glycolysis; pyruvate from D-glyceraldehyde 3-phosphate: step 5/5. Its activity is regulated as follows. Regulated by phosphoenolpyruvate substrate and is allosterically activated by ribose-5-phosphate, AMP and other nucleoside monophosphates but not by fructose-1,6-bisphosphate. This is Pyruvate kinase (pyk) from Mycoplasma pneumoniae (strain ATCC 29342 / M129 / Subtype 1) (Mycoplasmoides pneumoniae).